The chain runs to 376 residues: Transcriptional regulator STP4 (376 aa).

Disordered regions lie at residues Q25–S58, S89–S122, and V137–P210. 2 stretches are compositionally biased toward low complexity: residues S32–P50 and S89–T103. Composition is skewed to polar residues over residues P146 to K183 and E191 to S200. The C2H2-type zinc finger occupies H241–H263.

The protein localises to the nucleus. In terms of biological role, probable transcription factor involved in response to cell wall damage. The protein is Transcriptional regulator STP4 (STP4) of Candida albicans (strain SC5314 / ATCC MYA-2876) (Yeast).